The primary structure comprises 200 residues: MATPEEVAYEKFLERVRRTVYVDELTPLATAPVISSAFNQFGTVKKVSFIPNYLGPKELPMGVLVEMENEEMTQAVISTVSQLPFMVAGMPRPVRACAAEPNMFVDKPKKPGRTVRFRWIKPNDPDFDKARRVKRLARKHSAENSFMLKKQLEEAEKLSKQQAETAVTHHKKFEMMDKLLYDGVAQKLAGRYDLKGFPYR.

One can recognise an RRM domain in the interval 18 to 101 (RTVYVDELTP…RPVRACAAEP (84 aa)).

As to quaternary structure, component of the ASI1-AIPP1-EDM2 (AAE) RNA regulatory complex composed of at least AIPP1/EDM3, ASI1 and EDM2 and may contain CPL2, AIPP2 and AIPP3/BDT1. Binds directly to ASI1 and EDM2 and may function as a bridge protein between them. Co-associates with EDM2 to histone H3 lysine 9 dimethylation (H3K9me2)-marked chromatin and transcripts at a critical proximal polyadenylation site of RPP7 to hamper proximal transcript polyadeylation/termination.

The protein localises to the nucleus. Functionally, prevents gene silencing by suppressing CHG methylation as well as histone H3 lysine 9 dimethylation (H3K9me2) status at target loci. Collaboratively with ASI1 and EDM2, the AAE complex regulates alternative RNA processing (e.g. alternative splicing) and epigenetic silencing (e.g. H3K9me2) of intronic heterochromatin-containing genes as well as genic heterochromatin-containing genes by promoting distal 3' polyadenylation, thus being required for the accumulation of their full-length transcripts. May also modulate transposable elements (TE) expression. Mediates RPP7-dependent race-specific disease resistance by promoting histone H3 lysine 9 dimethylation (H3K9me2) at the proximal RPP7 polyadenylation site, thus controlling alternative polyadenylation of RPP7 immune receptor transcripts and facilitating 2-phosphoserine RNAPII occupancy. In cv. Columbia, required for RPP7-dependent disease resistance against the Hyaloperonospora arabidopsidis isolate Hiks1. The chain is ASI1-immunoprecipitated protein 1 from Arabidopsis thaliana (Mouse-ear cress).